Consider the following 499-residue polypeptide: Xylulose kinase (499 aa).

81–82 is a substrate binding site; that stretch reads MH. The active-site Proton acceptor is the Asp239.

Belongs to the FGGY kinase family.

The enzyme catalyses D-xylulose + ATP = D-xylulose 5-phosphate + ADP + H(+). Its function is as follows. Catalyzes the phosphorylation of D-xylulose to D-xylulose 5-phosphate. The chain is Xylulose kinase from Bacillus subtilis (strain 168).